Reading from the N-terminus, the 333-residue chain is MHLKPTRFFHANQPPMPHSYEMEDLCFDDMQYRWSPSNTPYRSMSRRYKSVSRSGPSMRVRSRTPCRRQTIRGKLMSKERSVYRHYFNYIARSPPEELATVRGLIVPIIKTTPVTLPFNLGQTVADNCLSLSGMGYHLGLGGYCPTCTASGEPRLCRTDRAALILAYVQQLNNIYEYRVFLASILALSDRANMQAASAEPLLSSVLAQPELFFMYHIMREGGMRDIRVLFYRDGDAGGFMMYVIFPGKSVHLHYRLIDHIQAACRGYKIVAHVWQTTFLLSVCRNPEQQTETVVPSIGTSDVYCKMCDLNFDGELLLEYKRLYALFDDFVPPR.

The segment at 45–64 is disordered; it reads SRRYKSVSRSGPSMRVRSRT. The segment at 128–251 adopts a CCCH-type zinc-finger fold; sequence CLSLSGMGYH…YVIFPGKSVH (124 aa).

Belongs to the herpesviridae NEC1 protein family. Forms a heterohexameric complex with NEC2. Interacts with capsid vertex specific component 2/CVC2; this interaction directs the capsid to the host inner nuclear membrane to initiate budding. In terms of processing, phosphorylated at serine residues in the N-terminus. This phosphorylation regulates the localization within the inner nuclear membrane.

The protein resides in the host nucleus inner membrane. In terms of biological role, plays an essential role in virion nuclear egress, the first step of virion release from infected cell. Within the host nucleus, NEC1 interacts with the newly formed capsid through the vertexes and directs it to the inner nuclear membrane by associating with NEC2. Induces the budding of the capsid at the inner nuclear membrane as well as its envelopment into the perinuclear space. There, the NEC1/NEC2 complex promotes the fusion of the enveloped capsid with the outer nuclear membrane and the subsequent release of the viral capsid into the cytoplasm where it will reach the secondary budding sites in the host Golgi or trans-Golgi network. The chain is Nuclear egress protein 1 from Varicella-zoster virus (strain Dumas) (HHV-3).